The primary structure comprises 102 residues: Small ribosomal subunit protein uS10 (102 aa).

This sequence belongs to the universal ribosomal protein uS10 family. As to quaternary structure, part of the 30S ribosomal subunit.

In terms of biological role, involved in the binding of tRNA to the ribosomes. In Sulfurisphaera tokodaii (strain DSM 16993 / JCM 10545 / NBRC 100140 / 7) (Sulfolobus tokodaii), this protein is Small ribosomal subunit protein uS10.